Reading from the N-terminus, the 366-residue chain is Alanine racemase (366 aa).

The active-site Proton acceptor; specific for D-alanine is the lysine 40. N6-(pyridoxal phosphate)lysine is present on lysine 40. Position 136 (arginine 136) interacts with substrate. Tyrosine 263 serves as the catalytic Proton acceptor; specific for L-alanine. Methionine 310 is a substrate binding site.

The protein belongs to the alanine racemase family. Pyridoxal 5'-phosphate is required as a cofactor.

The enzyme catalyses L-alanine = D-alanine. Its pathway is amino-acid biosynthesis; D-alanine biosynthesis; D-alanine from L-alanine: step 1/1. Catalyzes the interconversion of L-alanine and D-alanine. May also act on other amino acids. In Streptococcus equi subsp. equi (strain 4047), this protein is Alanine racemase (alr).